Reading from the N-terminus, the 443-residue chain is Phosphoglucosamine mutase (443 aa).

S100 acts as the Phosphoserine intermediate in catalysis. Positions 100, 239, 241, and 243 each coordinate Mg(2+). At S100 the chain carries Phosphoserine.

This sequence belongs to the phosphohexose mutase family. The cofactor is Mg(2+). Activated by phosphorylation.

It catalyses the reaction alpha-D-glucosamine 1-phosphate = D-glucosamine 6-phosphate. Catalyzes the conversion of glucosamine-6-phosphate to glucosamine-1-phosphate. The protein is Phosphoglucosamine mutase of Shewanella loihica (strain ATCC BAA-1088 / PV-4).